Reading from the N-terminus, the 388-residue chain is Protein YnjB (388 aa).

The segment at 333–357 is disordered; that stretch reads AVWGDPSVLDPQKLPDGQRESLQSR.

The protein is Protein YnjB (ynjB) of Escherichia coli (strain K12).